The following is a 67-amino-acid chain: Large ribosomal subunit protein bL31c (67 aa).

It belongs to the bacterial ribosomal protein bL31 family. Type A subfamily. As to quaternary structure, part of the 50S ribosomal subunit.

It localises to the plastid. It is found in the chloroplast. Binds the 23S rRNA. In Cyanidioschyzon merolae (strain NIES-3377 / 10D) (Unicellular red alga), this protein is Large ribosomal subunit protein bL31c (rpl31).